The chain runs to 102 residues: Putative defensin-like protein 152 (102 aa).

The N-terminal stretch at 1–29 is a signal peptide; that stretch reads MKKASQLSTTILTIFIVLAIGMMVKGTVG. Disulfide bonds link Cys-34–Cys-93, Cys-51–Cys-71, Cys-56–Cys-87, and Cys-60–Cys-89.

This sequence belongs to the DEFL family.

The protein localises to the secreted. This is Putative defensin-like protein 152 (LCR11) from Arabidopsis thaliana (Mouse-ear cress).